A 334-amino-acid chain; its full sequence is MSPDRKLITIFGGTGKQGGSVAHSLLQNPDFRVRVITRNAQSDASRKLAALGADIAQGDGFSGDEMLSAFSGSWGAFVNINSDDKIFTTEGGPTEFDMGKIIVDSAVQAGVKHLVFSSGPPCTEMTNGRVRMKAMDMKNKIEQYARSLGSFETFTPIGAGWFLENFLGKEVAPVFGGFPYFPDDQGYLTFRVPYWGGDEHVPWLSISDDFGDIVQGIFLDPGRWNGHFVHGVSDIRSFEQVVADFAAVTGNKARFQPILPTWEAFDTHGIQELEDVKLMFGFTQLTGGRYFGPEDTEVDTARQLKQITGLKLGRPEGQHKLTSARDWFAARFAN.

NADP(+) contacts are provided by residues 12–17 (GGTGKQ), 38–42 (RNAQS), 59–60 (DG), 80–82 (INS), K138, and 162–165 (FLEN).

The protein belongs to the NmrA-type oxidoreductase family.

Its pathway is secondary metabolite biosynthesis. In terms of biological role, nmrA-like family domain-containing oxidoreductase; part of the lna gene cluster that mediates the biosynthesis of diastereomeric piperazines. Lna and lnb clusters encode sets of enzymes that produce overlapping sets of previously undescribed metabolites such as piperazinomycin-like metabolites or morpholine. The lna and lnb biosynthetic pathways appear to be part of a signaling network that controls the formation of sclerotia, a resilient overwintering structure. One primary function of the non-canonical nonribosomal peptide synthetases lnaA and lnbA consists in the reduction of L-tyrosine. The presence in the clusters of tailoring enzymes such as the oxidoreductases lnaB, lnbB, lnaE or lnbE, as well as of the cytochrome P450 monooxygenases lnaC, lnaD, or lnbC, might explain formation of various diastereomeric piperazines. The chain is NmrA-like family domain-containing oxidoreductase lnaB from Aspergillus flavus (strain ATCC 200026 / FGSC A1120 / IAM 13836 / NRRL 3357 / JCM 12722 / SRRC 167).